The chain runs to 67 residues: Small ribosomal subunit protein eS27 (67 aa).

Cys-22, Cys-25, Cys-41, and Cys-44 together coordinate Zn(2+). The segment at 22–44 (CPDCGNEQVTFSHAAMVVRCLVC) adopts a C4-type zinc-finger fold.

The protein belongs to the eukaryotic ribosomal protein eS27 family. Part of the 30S ribosomal subunit. Zn(2+) serves as cofactor.

This is Small ribosomal subunit protein eS27 from Pyrobaculum neutrophilum (strain DSM 2338 / JCM 9278 / NBRC 100436 / V24Sta) (Thermoproteus neutrophilus).